The following is a 680-amino-acid chain: WD repeat-containing protein 48 homolog (680 aa).

8 WD repeats span residues 26-65, 71-110, 113-152, 164-203, 206-245, 248-287, 290-329, and 350-389; these read QHRN…SEKY, HHND…CMST, THRD…ALTA, GSKD…RSMK, GHTE…CVQT, VHKE…NKTL, EEQA…RCTM, and KGGA…KKEQ. Residues 592-616 form a disordered region; sequence ETTPSGGNANNSLQNSQSDANSEGS.

It belongs to the WD repeat WDR48 family. In terms of assembly, catalytic component of the Usp12-46 deubiquitylase complex consisting of Usp12-46, Wdr20 and Uaf1; regulatory subunit that, together wtih Wdr20, stabilizes Usp12-46. The Usp12-46 deubiquitylase complex associates with arr/arrow; the interaction leads to deubiquitination and stabilization of arr/arrow.

Its function is as follows. Regulatory component of the Usp12-46 deubiquitylase complex. activates deubiquitination by increasing the catalytic turnover without increasing the affinity of deubiquitinating enzymes for the substrate. The complex deubiquitylates the wg/wingless-signaling receptor arr/arrow, which stabilizes the receptor and increases its concentration at the cell surface; this enhances the sensitivity of cells to wg/wingless-signal stimulation. This increases the amplitude and spatial range of the signaling response to the wg/wingless morphogen gradient, facilitating the precise concentration-dependent regulation of its target genes. Together with Wdr20 and Usp12-46 required for wg/wingless-mediated signaling in the wing imaginal disc and for wg/wingless-dependent regulation of intestinal stem cell proliferation. In Drosophila erecta (Fruit fly), this protein is WD repeat-containing protein 48 homolog.